The following is a 458-amino-acid chain: tRNA-2-methylthio-N(6)-dimethylallyladenosine synthase (458 aa).

An MTTase N-terminal domain is found at Q3–C120. [4Fe-4S] cluster contacts are provided by C12, C49, C83, C157, C161, and C164. Positions R143 to K375 constitute a Radical SAM core domain. In terms of domain architecture, TRAM spans A378 to G441.

The protein belongs to the methylthiotransferase family. MiaB subfamily. As to quaternary structure, monomer. [4Fe-4S] cluster is required as a cofactor.

The protein localises to the cytoplasm. It catalyses the reaction N(6)-dimethylallyladenosine(37) in tRNA + (sulfur carrier)-SH + AH2 + 2 S-adenosyl-L-methionine = 2-methylsulfanyl-N(6)-dimethylallyladenosine(37) in tRNA + (sulfur carrier)-H + 5'-deoxyadenosine + L-methionine + A + S-adenosyl-L-homocysteine + 2 H(+). Catalyzes the methylthiolation of N6-(dimethylallyl)adenosine (i(6)A), leading to the formation of 2-methylthio-N6-(dimethylallyl)adenosine (ms(2)i(6)A) at position 37 in tRNAs that read codons beginning with uridine. The chain is tRNA-2-methylthio-N(6)-dimethylallyladenosine synthase from Methylococcus capsulatus (strain ATCC 33009 / NCIMB 11132 / Bath).